Consider the following 428-residue polypeptide: Serine hydroxymethyltransferase (428 aa).

Gly120–Ile122 is a binding site for (6S)-5,6,7,8-tetrahydrofolate. N6-(pyridoxal phosphate)lysine is present on Lys226.

The protein belongs to the SHMT family. Homodimer. Pyridoxal 5'-phosphate serves as cofactor.

The protein resides in the cytoplasm. The enzyme catalyses 5,10-methylenetetrahydromethanopterin + glycine + H2O = 5,6,7,8-tetrahydromethanopterin + L-serine. The protein operates within amino-acid biosynthesis; glycine biosynthesis; glycine from L-serine: step 1/1. In terms of biological role, catalyzes the reversible interconversion of serine and glycine with tetrahydromethanopterin (H4MPT) serving as the one-carbon carrier. Also exhibits a pteridine-independent aldolase activity toward beta-hydroxyamino acids, producing glycine and aldehydes, via a retro-aldol mechanism. In Methanopyrus kandleri (strain AV19 / DSM 6324 / JCM 9639 / NBRC 100938), this protein is Serine hydroxymethyltransferase.